Reading from the N-terminus, the 208-residue chain is Putative ADP-ribose pyrophosphatase YjhB (208 aa).

One can recognise a Nudix hydrolase domain in the interval 69–195; it reads TPKADVRGAV…NTPSQLSMLF (127 aa). The Nudix box motif lies at 100–121; sequence GFCEIGLSPAENVVKEIKEESG. Glu-115 and Glu-119 together coordinate Mg(2+).

This sequence belongs to the Nudix hydrolase family. The cofactor is Mg(2+). Requires Mn(2+) as cofactor.

Probably mediates the hydrolysis of some nucleoside diphosphate derivatives. This is Putative ADP-ribose pyrophosphatase YjhB (yjhB) from Bacillus subtilis (strain 168).